A 535-amino-acid chain; its full sequence is CTP synthase (535 aa).

The segment at 1-267 is amidoligase domain; that stretch reads MTKFIFVTGG…DDIVIQRLQL (267 aa). Residue serine 13 coordinates CTP. Serine 13 is a UTP binding site. 14–19 is an ATP binding site; the sequence is SLGKGI. L-glutamine is bound at residue tyrosine 54. Aspartate 71 contributes to the ATP binding site. Mg(2+) is bound by residues aspartate 71 and glutamate 141. CTP contacts are provided by residues 148–150, 188–193, and lysine 224; these read DIE and KTKPTQ. Residues 188 to 193 and lysine 224 each bind UTP; that span reads KTKPTQ. Residue 240 to 242 participates in ATP binding; the sequence is RDA. Residues 293-535 form the Glutamine amidotransferase type-1 domain; that stretch reads TIGLVGKYVS…VEAALNYQQK (243 aa). An L-glutamine-binding site is contributed by glycine 355. Cysteine 382 acts as the Nucleophile; for glutamine hydrolysis in catalysis. Residues 383-386, glutamate 406, and arginine 463 contribute to the L-glutamine site; that span reads LGMQ. Residues histidine 508 and glutamate 510 contribute to the active site.

Belongs to the CTP synthase family. As to quaternary structure, homotetramer.

The enzyme catalyses UTP + L-glutamine + ATP + H2O = CTP + L-glutamate + ADP + phosphate + 2 H(+). The catalysed reaction is L-glutamine + H2O = L-glutamate + NH4(+). It catalyses the reaction UTP + NH4(+) + ATP = CTP + ADP + phosphate + 2 H(+). The protein operates within pyrimidine metabolism; CTP biosynthesis via de novo pathway; CTP from UDP: step 2/2. Its activity is regulated as follows. Allosterically activated by GTP, when glutamine is the substrate; GTP has no effect on the reaction when ammonia is the substrate. The allosteric effector GTP functions by stabilizing the protein conformation that binds the tetrahedral intermediate(s) formed during glutamine hydrolysis. Inhibited by the product CTP, via allosteric rather than competitive inhibition. Its function is as follows. Catalyzes the ATP-dependent amination of UTP to CTP with either L-glutamine or ammonia as the source of nitrogen. Regulates intracellular CTP levels through interactions with the four ribonucleotide triphosphates. This Staphylococcus epidermidis (strain ATCC 35984 / DSM 28319 / BCRC 17069 / CCUG 31568 / BM 3577 / RP62A) protein is CTP synthase.